Consider the following 132-residue polypeptide: Intraflagellar transport protein 20 homolog B (132 aa).

A coiled-coil region spans residues 87 to 112; sequence EAQQQQLYALIAEKKMQLERYRIEYD.

The protein localises to the golgi apparatus. Its subcellular location is the cis-Golgi network. The protein resides in the cytoplasm. It is found in the cytoskeleton. It localises to the microtubule organizing center. The protein localises to the centrosome. Its subcellular location is the centriole. The protein resides in the cell projection. It is found in the cilium. In terms of biological role, involved in ciliary process assembly. May play a role in the trafficking of ciliary membrane proteins from the Golgi complex to the cilium. Regulates the platelet-derived growth factor receptor-alpha (PDGFRA) signaling pathway. Plays an important role in spermatogenesis, particularly spermiogenesis, when germ cells form flagella. This is Intraflagellar transport protein 20 homolog B (ift20-b) from Xenopus laevis (African clawed frog).